The chain runs to 360 residues: uncharacterized protein (360 aa).

In terms of domain architecture, ABC transporter spans 4–235 (LSLQHIQKIY…PANMFVAGFI (232 aa)). ATP is bound at residue 37–44 (GPSGCGKS).

Belongs to the ABC transporter superfamily.

This is an uncharacterized protein from Escherichia coli O157:H7.